The primary structure comprises 331 residues: Ribosomal RNA small subunit methyltransferase C (331 aa).

The protein belongs to the methyltransferase superfamily. RsmC family. As to quaternary structure, monomer.

The protein resides in the cytoplasm. It carries out the reaction guanosine(1207) in 16S rRNA + S-adenosyl-L-methionine = N(2)-methylguanosine(1207) in 16S rRNA + S-adenosyl-L-homocysteine + H(+). In terms of biological role, specifically methylates the guanine in position 1207 of 16S rRNA in the 30S particle. This is Ribosomal RNA small subunit methyltransferase C from Ectopseudomonas mendocina (strain ymp) (Pseudomonas mendocina).